The chain runs to 301 residues: Ornithine carbamoyltransferase (301 aa).

Residues Arg-100 and 127–130 (HPCQ) contribute to the carbamoyl phosphate site. Residues Asn-158, Asp-221, and 225-226 (SM) contribute to the L-ornithine site. Residues 260–261 (CL) and Arg-288 contribute to the carbamoyl phosphate site.

This sequence belongs to the aspartate/ornithine carbamoyltransferase superfamily. OTCase family.

It localises to the cytoplasm. The catalysed reaction is carbamoyl phosphate + L-ornithine = L-citrulline + phosphate + H(+). It functions in the pathway amino-acid biosynthesis; L-arginine biosynthesis; L-arginine from L-ornithine and carbamoyl phosphate: step 1/3. Its function is as follows. Reversibly catalyzes the transfer of the carbamoyl group from carbamoyl phosphate (CP) to the N(epsilon) atom of ornithine (ORN) to produce L-citrulline. This is Ornithine carbamoyltransferase from Shewanella oneidensis (strain ATCC 700550 / JCM 31522 / CIP 106686 / LMG 19005 / NCIMB 14063 / MR-1).